The primary structure comprises 157 residues: UPF0262 protein Atu0536 (157 aa).

Belongs to the UPF0262 family.

This chain is UPF0262 protein Atu0536, found in Agrobacterium fabrum (strain C58 / ATCC 33970) (Agrobacterium tumefaciens (strain C58)).